We begin with the raw amino-acid sequence, 843 residues long: Protein P (843 aa).

A terminal protein domain (TP) region spans residues Met1 to Gln177. A spacer region spans residues Glu178–Leu346. The tract at residues Lys228 to Ser316 is disordered. Composition is skewed to polar residues over residues Thr262–Phe276, Asn286–Gly299, and Val307–Ser316. Residues Glu347–Gln690 are polymerase/reverse transcriptase domain (RT). Positions Glu357–Ile600 constitute a Reverse transcriptase domain. Mg(2+) contacts are provided by Asp429, Asp551, and Asp552.

It belongs to the hepadnaviridae P protein family.

It carries out the reaction DNA(n) + a 2'-deoxyribonucleoside 5'-triphosphate = DNA(n+1) + diphosphate. The catalysed reaction is Endonucleolytic cleavage to 5'-phosphomonoester.. Activated by host HSP70 and HSP40 in vitro to be able to bind the epsilon loop of the pgRNA. Because deletion of the RNase H region renders the protein partly chaperone-independent, the chaperones may be needed indirectly to relieve occlusion of the RNA-binding site by this domain. Inhibited by several reverse-transcriptase inhibitors: Lamivudine, Adefovir and Entecavir. Functionally, multifunctional enzyme that converts the viral RNA genome into dsDNA in viral cytoplasmic capsids. This enzyme displays a DNA polymerase activity that can copy either DNA or RNA templates, and a ribonuclease H (RNase H) activity that cleaves the RNA strand of RNA-DNA heteroduplexes in a partially processive 3'- to 5'-endonucleasic mode. Neo-synthesized pregenomic RNA (pgRNA) are encapsidated together with the P protein, and reverse-transcribed inside the nucleocapsid. Initiation of reverse-transcription occurs first by binding the epsilon loop on the pgRNA genome, and is initiated by protein priming, thereby the 5'-end of (-)DNA is covalently linked to P protein. Partial (+)DNA is synthesized from the (-)DNA template and generates the relaxed circular DNA (RC-DNA) genome. After budding and infection, the RC-DNA migrates in the nucleus, and is converted into a plasmid-like covalently closed circular DNA (cccDNA). The activity of P protein does not seem to be necessary for cccDNA generation, and is presumably released from (+)DNA by host nuclear DNA repair machinery. The chain is Protein P from Homo sapiens (Human).